The primary structure comprises 424 residues: Enolase (424 aa).

Q163 contacts (2R)-2-phosphoglycerate. The active-site Proton donor is the E205. Mg(2+) is bound by residues D242, E285, and D312. (2R)-2-phosphoglycerate is bound by residues K337, R366, S367, and K388. The Proton acceptor role is filled by K337.

The protein belongs to the enolase family. Mg(2+) is required as a cofactor.

The protein resides in the cytoplasm. The protein localises to the secreted. It localises to the cell surface. The enzyme catalyses (2R)-2-phosphoglycerate = phosphoenolpyruvate + H2O. The protein operates within carbohydrate degradation; glycolysis; pyruvate from D-glyceraldehyde 3-phosphate: step 4/5. In terms of biological role, catalyzes the reversible conversion of 2-phosphoglycerate (2-PG) into phosphoenolpyruvate (PEP). It is essential for the degradation of carbohydrates via glycolysis. The sequence is that of Enolase from Dinoroseobacter shibae (strain DSM 16493 / NCIMB 14021 / DFL 12).